Here is a 200-residue protein sequence, read N- to C-terminus: Probable GTP-binding protein EngB (200 aa).

In terms of domain architecture, EngB-type G spans 22 to 199 (NVAEVAFLGR…QDKITGYLFG (178 aa)). Residues 30–37 (GRSNVGKS), 57–61 (GKTQL), 85–88 (DLPG), 155–158 (TKID), and 177–180 (FLSN) contribute to the GTP site. Mg(2+) contacts are provided by serine 37 and threonine 59.

Belongs to the TRAFAC class TrmE-Era-EngA-EngB-Septin-like GTPase superfamily. EngB GTPase family. Mg(2+) is required as a cofactor.

Its function is as follows. Necessary for normal cell division and for the maintenance of normal septation. In Aliarcobacter butzleri (strain RM4018) (Arcobacter butzleri), this protein is Probable GTP-binding protein EngB.